The chain runs to 298 residues: Beta-1,3-galactosyltransferase 5 (298 aa).

At 1–7 (MAFPKMR) the chain is on the cytoplasmic side. A helical; Signal-anchor for type II membrane protein transmembrane segment spans residues 8–28 (LMYICLLVLGALCLYFSMYSL). Residues 29 to 298 (NPFKEQSFVY…PRTLLDYWQA (270 aa)) lie on the Lumenal side of the membrane. 3 N-linked (GlcNAc...) asparagine glycosylation sites follow: N130, N174, and N231.

Belongs to the glycosyltransferase 31 family.

Its subcellular location is the golgi apparatus membrane. The enzyme catalyses a globoside Gb4Cer (d18:1(4E)) + UDP-alpha-D-galactose = a globoside GalGb4Cer (d18:1(4E)) + UDP + H(+). It functions in the pathway protein modification; protein glycosylation. In terms of biological role, catalyzes the transfer of Gal to GlcNAc-based acceptors with a preference for the core3 O-linked glycan GlcNAc(beta1,3)GalNAc structure. Can use glycolipid LC3Cer as an efficient acceptor. This is Beta-1,3-galactosyltransferase 5 (B3GALT5) from Gorilla gorilla gorilla (Western lowland gorilla).